The sequence spans 155 residues: Putative pre-16S rRNA nuclease (155 aa).

It belongs to the YqgF nuclease family.

The protein resides in the cytoplasm. In terms of biological role, could be a nuclease involved in processing of the 5'-end of pre-16S rRNA. The polypeptide is Putative pre-16S rRNA nuclease (Xanthomonas axonopodis pv. citri (strain 306)).